Reading from the N-terminus, the 205-residue chain is MKAGIDEAGKGCVIGPLVVAGVACSDEDRLRKLGVKDSKKLSQGRREELAEEIRKICRTEVLKVSPENLDERMAAKTINEILKECYAEIILRLKPEIAYVDSPDVIPERLSRELEEITGLRVVAEHKADEKYPLVAAASIIAKVEREREIERLKEKFGDFGSGYASDPRTREVLKEWIASGRIPSCVRMRWKTVSNLRQKTLDDF.

The region spanning 1–203 (MKAGIDEAGK…VSNLRQKTLD (203 aa)) is the RNase H type-2 domain. Residues Asp-6 and Glu-7 each coordinate a divalent metal cation. A substrate-binding site is contributed by Arg-46. Position 101 (Asp-101) interacts with a divalent metal cation. Substrate contacts are provided by Lys-143, Arg-146, and Tyr-164.

It belongs to the RNase HII family. It depends on Mn(2+) as a cofactor. Mg(2+) is required as a cofactor.

The protein localises to the cytoplasm. The enzyme catalyses Endonucleolytic cleavage to 5'-phosphomonoester.. Endonuclease that specifically degrades the RNA of RNA-DNA hybrids. This Archaeoglobus fulgidus (strain ATCC 49558 / DSM 4304 / JCM 9628 / NBRC 100126 / VC-16) protein is Ribonuclease HII (rnhB).